We begin with the raw amino-acid sequence, 121 residues long: Large ribosomal subunit protein bL12 (121 aa).

The protein belongs to the bacterial ribosomal protein bL12 family. In terms of assembly, homodimer. Part of the ribosomal stalk of the 50S ribosomal subunit. Forms a multimeric L10(L12)X complex, where L10 forms an elongated spine to which 2 to 4 L12 dimers bind in a sequential fashion. Binds GTP-bound translation factors.

Functionally, forms part of the ribosomal stalk which helps the ribosome interact with GTP-bound translation factors. Is thus essential for accurate translation. The protein is Large ribosomal subunit protein bL12 of Clostridium perfringens (strain ATCC 13124 / DSM 756 / JCM 1290 / NCIMB 6125 / NCTC 8237 / Type A).